The chain runs to 1247 residues: Clustered mitochondria protein homolog (1247 aa).

The disordered stretch occupies residues 1–43 (MTLGSETKTDVEVPIINGKHEIPQEENDSGHSSINTPDSSEPD). Over residues 30–39 (GHSSINTPDS) the composition is skewed to polar residues. The region spanning 329–579 (SDSLRAIELT…RSMPPDVHYL (251 aa)) is the Clu domain. The disordered stretch occupies residues 1222–1247 (GKQQNGTTEESKTTDVAAQLDNETLD).

Belongs to the CLU family.

The protein localises to the cytoplasm. Its function is as follows. mRNA-binding protein involved in proper cytoplasmic distribution of mitochondria. The protein is Clustered mitochondria protein homolog of Caenorhabditis elegans.